Consider the following 416-residue polypeptide: CC-adding tRNA nucleotidyltransferase (416 aa).

31–34 (GAVR) serves as a coordination point for CTP. Asp46 and Asp48 together coordinate Mg(2+). Residues 106–107 (RD), Asn111, 148–157 (DPLRLLRAYR), and Arg188 each bind CTP.

Belongs to the tRNA nucleotidyltransferase/poly(A) polymerase family. Requires Mg(2+) as cofactor.

The catalysed reaction is a tRNA precursor + 2 CTP = a tRNA with a 3' CC end + 2 diphosphate. In terms of biological role, tRNA nucleotidyltransferase involved in the synthesis of the tRNA CCA terminus. Adds the two cytidine residues to tRNA. The chain is CC-adding tRNA nucleotidyltransferase from Synechocystis sp. (strain ATCC 27184 / PCC 6803 / Kazusa).